The following is a 137-amino-acid chain: Protein PsiE homolog (137 aa).

Transmembrane regions (helical) follow at residues 15-35, 55-75, 82-102, and 108-128; these read LRIT…AFLI, YYMT…ALIV, FHFP…RFII, and ATST…LFLA.

This sequence belongs to the PsiE family.

It localises to the cell membrane. This chain is Protein PsiE homolog, found in Listeria innocua serovar 6a (strain ATCC BAA-680 / CLIP 11262).